The primary structure comprises 562 residues: Potassium-transporting ATPase potassium-binding subunit (562 aa).

12 helical membrane passes run 6–26 (FLLI…LGGF), 62–82 (YALA…VLLM), 132–152 (GLTV…FALI), 175–195 (LYVL…QGVL), 253–273 (FVQM…FGQV), 283–303 (LIWA…YAEL), 327–347 (FGIL…CGAV), 356–376 (ALGG…FGGV), 379–399 (GLYG…LMIG), 416–436 (MTAL…ALAL), 483–503 (LLLA…VLAI), and 526–546 (LFIG…FIPA).

Belongs to the KdpA family. As to quaternary structure, the system is composed of three essential subunits: KdpA, KdpB and KdpC.

Its subcellular location is the cell inner membrane. Part of the high-affinity ATP-driven potassium transport (or Kdp) system, which catalyzes the hydrolysis of ATP coupled with the electrogenic transport of potassium into the cytoplasm. This subunit binds the periplasmic potassium ions and delivers the ions to the membrane domain of KdpB through an intramembrane tunnel. The chain is Potassium-transporting ATPase potassium-binding subunit from Yersinia pseudotuberculosis serotype IB (strain PB1/+).